A 151-amino-acid polypeptide reads, in one-letter code: Peptide methionine sulfoxide reductase MsrB (151 aa).

The MsrB domain occupies 5 to 127; it reads KEERLKQLTR…NSAALRFVPK (123 aa). Cysteine 116 functions as the Nucleophile in the catalytic mechanism.

The protein belongs to the MsrB Met sulfoxide reductase family.

It carries out the reaction L-methionyl-[protein] + [thioredoxin]-disulfide + H2O = L-methionyl-(R)-S-oxide-[protein] + [thioredoxin]-dithiol. This chain is Peptide methionine sulfoxide reductase MsrB, found in Bacillus licheniformis (strain ATCC 14580 / DSM 13 / JCM 2505 / CCUG 7422 / NBRC 12200 / NCIMB 9375 / NCTC 10341 / NRRL NRS-1264 / Gibson 46).